A 193-amino-acid polypeptide reads, in one-letter code: Potassium-transporting ATPase KdpC subunit (193 aa).

A helical transmembrane segment spans residues 14–34 (ITFTFLVLCGLVYPLIVTGIA).

This sequence belongs to the KdpC family. The system is composed of three essential subunits: KdpA, KdpB and KdpC.

The protein localises to the cell membrane. Its function is as follows. Part of the high-affinity ATP-driven potassium transport (or Kdp) system, which catalyzes the hydrolysis of ATP coupled with the electrogenic transport of potassium into the cytoplasm. This subunit acts as a catalytic chaperone that increases the ATP-binding affinity of the ATP-hydrolyzing subunit KdpB by the formation of a transient KdpB/KdpC/ATP ternary complex. This Bacillus cereus (strain B4264) protein is Potassium-transporting ATPase KdpC subunit.